We begin with the raw amino-acid sequence, 500 residues long: Aspartyl/glutamyl-tRNA(Asn/Gln) amidotransferase subunit B (500 aa).

Belongs to the GatB/GatE family. GatB subfamily. As to quaternary structure, heterotrimer of A, B and C subunits.

It catalyses the reaction L-glutamyl-tRNA(Gln) + L-glutamine + ATP + H2O = L-glutaminyl-tRNA(Gln) + L-glutamate + ADP + phosphate + H(+). It carries out the reaction L-aspartyl-tRNA(Asn) + L-glutamine + ATP + H2O = L-asparaginyl-tRNA(Asn) + L-glutamate + ADP + phosphate + 2 H(+). Functionally, allows the formation of correctly charged Asn-tRNA(Asn) or Gln-tRNA(Gln) through the transamidation of misacylated Asp-tRNA(Asn) or Glu-tRNA(Gln) in organisms which lack either or both of asparaginyl-tRNA or glutaminyl-tRNA synthetases. The reaction takes place in the presence of glutamine and ATP through an activated phospho-Asp-tRNA(Asn) or phospho-Glu-tRNA(Gln). The protein is Aspartyl/glutamyl-tRNA(Asn/Gln) amidotransferase subunit B of Sinorhizobium fredii (strain NBRC 101917 / NGR234).